A 481-amino-acid polypeptide reads, in one-letter code: Pentatricopeptide repeat-containing protein At2g48000 (481 aa).

9 PPR repeats span residues 147 to 181, 187 to 221, 222 to 256, 257 to 287, 292 to 324, 328 to 362, 364 to 398, 399 to 433, and 434 to 469; these read TTSV…QDGP, SVST…NILP, DSST…LVKP, TLAT…VKRH, EIKL…LIPK, KPWL…GLQI, TDGI…GWKM, SRSM…KISR, and SKKT…GHDF.

Belongs to the PPR family. P subfamily.

The protein is Pentatricopeptide repeat-containing protein At2g48000 of Arabidopsis thaliana (Mouse-ear cress).